The primary structure comprises 66 residues: Large ribosomal subunit protein uL30 (66 aa).

It belongs to the universal ribosomal protein uL30 family. In terms of assembly, part of the 50S ribosomal subunit.

In Azorhizobium caulinodans (strain ATCC 43989 / DSM 5975 / JCM 20966 / LMG 6465 / NBRC 14845 / NCIMB 13405 / ORS 571), this protein is Large ribosomal subunit protein uL30.